We begin with the raw amino-acid sequence, 90 residues long: uncharacterized protein (90 aa).

2 helical membrane passes run 17–37 (ILSMHLSPVSILSPVLLIYLV) and 55–75 (ICFGVSLFLSFFLVRILWGIA).

The protein localises to the membrane. This is an uncharacterized protein from Schizosaccharomyces pombe (strain 972 / ATCC 24843) (Fission yeast).